We begin with the raw amino-acid sequence, 360 residues long: tRNA pseudouridine synthase D (360 aa).

The active-site Nucleophile is Asp76. The 182-residue stretch at 151 to 332 (GMPNFFGYQR…HGIYKEKNAW (182 aa)) folds into the TRUD domain.

Belongs to the pseudouridine synthase TruD family.

It carries out the reaction uridine(13) in tRNA = pseudouridine(13) in tRNA. Functionally, responsible for synthesis of pseudouridine from uracil-13 in transfer RNAs. This chain is tRNA pseudouridine synthase D, found in Nitratiruptor sp. (strain SB155-2).